The chain runs to 151 residues: Transcriptional regulator MraZ (151 aa).

2 SpoVT-AbrB domains span residues 5 to 52 (ANAI…PLDE) and 81 to 124 (AVDL…DEDA).

The protein belongs to the MraZ family. As to quaternary structure, forms oligomers.

The protein resides in the cytoplasm. Its subcellular location is the nucleoid. This is Transcriptional regulator MraZ from Pseudomonas fluorescens (strain Pf0-1).